A 1170-amino-acid chain; its full sequence is Glucose transport transcription regulator RGT1 (1170 aa).

Positions 1–22 (MNELNTVSTNSSDSTKNGGTSN) are enriched in polar residues. The disordered stretch occupies residues 1-46 (MNELNTVSTNSSDSTKNGGTSNSPDDMDSAAAASHAIKKRTKASRA). Residues 47–76 (CDQCRKKKIKCDYKDEKGVCSNCQRNGDRC) constitute a DNA-binding region (zn(2)-C6 fungal-type). The tract at residues 77–149 (SFDRVPLKRG…PSTPSRSNSV (73 aa)) is disordered. The span at 99–108 (RTNEIQDHNN) shows a compositional bias: basic and acidic residues. A compositionally biased stretch (low complexity) spans 113 to 138 (NTFDNSNNTLNNNTGNSGDNGINSNT). Positions 139–149 (VPSTPSRSNSV) are enriched in polar residues. Phosphoserine is present on residues S202, S205, S208, and S229. 5 disordered regions span residues 226 to 254 (VQQS…SASG), 269 to 288 (APTD…IPSL), 293 to 323 (SNSL…LQQG), 384 to 506 (AQQT…HPMT), and 944 to 977 (NYRP…SAAP). A compositionally biased stretch (low complexity) spans 239-250 (SGNANGSVTGSG). A compositionally biased stretch (basic and acidic residues) spans 271 to 280 (TDDHNGEQTR). A phosphoserine mark is found at S283 and S284. 3 stretches are compositionally biased toward low complexity: residues 293-302 (SNSLLLGGQP), 309-323 (QQSQ…LQQG), and 385-397 (QQTQ…QVPQ). Phosphoserine is present on residues S410 and S414. The span at 411-422 (APVSVTLSTDRL) shows a compositional bias: polar residues. Low complexity predominate over residues 424 to 444 (GNENNNGEINNNNGSNNSGSS). Residues 445–457 (KDTSQHSQESVTT) are compositionally biased toward polar residues. Positions 473-488 (STKKRRKSYVSKKTKP) are enriched in basic residues. Polar residues predominate over residues 493-506 (SISITSKDSAHPMT). The residue at position 1130 (S1130) is a Phosphoserine.

It belongs to the EDS1/RGT1 family. In terms of processing, glucose-induced phosphorylation regulates the DNA-binding activity. Hyperphosphorylation in cells growing on high levels of glucose does prevents DNA-binding and dephosphorylation restores DNA-binding ability.

The protein resides in the nucleus. It localises to the cytoplasm. In terms of biological role, glucose-responsive transcription factor that regulates expression of several glucose transporter (HXT) genes in response to glucose. In the absence of glucose, it functions as a transcriptional repressor, whereas high concentrations of glucose cause it to function as a transcriptional activator. In cells growing on low levels of glucose, has a neutral role, neither repressing nor activating transcription. Binds the consensus binding site sequence 5'-CGGANNA-3', of which multiple copies are present in all HXT promoters regulated by RGT1. This is Glucose transport transcription regulator RGT1 (RGT1) from Saccharomyces cerevisiae (strain RM11-1a) (Baker's yeast).